Here is an 898-residue protein sequence, read N- to C-terminus: Serine/threonine-protein kinase TAO3 (898 aa).

Residues 24–277 (FIGLHEIGHG…SAELLRHDFV (254 aa)) form the Protein kinase domain. Residues 30–38 (IGHGSFGAV) and lysine 53 contribute to the ATP site. Aspartate 147 (proton acceptor) is an active-site residue. 2 disordered regions span residues 316–362 (TRNG…SQSS) and 405–425 (DEAG…VQSQ). Position 324 is a phosphoserine; by ATM (serine 324). Phosphoserine is present on residues serine 331, serine 343, serine 346, and serine 349. A compositionally biased stretch (polar residues) spans 334-351 (GTSLNREMDSLGSNHSIP). Residues 352–362 (SMSVSTGSQSS) are compositionally biased toward low complexity. Residue threonine 357 is modified to Phosphothreonine. Serine 359 carries the post-translational modification Phosphoserine. Positions 405–416 (DEAGHGDPRPEP) are enriched in basic and acidic residues. Serine 442 carries the phosphoserine modification. Coiled coils occupy residues 452–502 (EQEN…THAN), 548–649 (FLES…HAML), and 754–879 (LKTL…DMES). Positions 565–596 (EEMNEDHSTPKKEKQERISKHKENLQHTQAEE) are disordered. Lysine 830 carries the N6-acetyllysine modification.

This sequence belongs to the protein kinase superfamily. STE Ser/Thr protein kinase family. STE20 subfamily. Self-associates. Interacts with ERN1 and TRAF2. Interaction with TRAF2 is facilitated under ER stress conditions, such as treatment with tunicamycin, and may promote TRAF2 phosphorylation. Interacts (via N-terminus) with STK25; the interaction promotes STK25 abundance at the level of protein expression and/or stability. As to quaternary structure, (Microbial infection) Interacts with herpes simplex virus 1 UL37 protein. Autophosphorylated. Phosphorylation at Ser-324 by ATM following DNA damage is required for activation of the p38/MAPK14 stress-activated MAPK cascade. Phosphorylated at Ser-324 and on Tyr residues during T cell activation. Phosphorylated by LRRK2. As to expression, ubiquitously expressed at a low level, and highly expressed in peripheral blood leukocytes (PBLs), thymus, spleen, kidney, skeletal muscle, heart and liver.

It is found in the cytoplasm. The protein localises to the cell membrane. Its subcellular location is the membrane raft. It localises to the lipid droplet. The enzyme catalyses L-seryl-[protein] + ATP = O-phospho-L-seryl-[protein] + ADP + H(+). It catalyses the reaction L-threonyl-[protein] + ATP = O-phospho-L-threonyl-[protein] + ADP + H(+). Functionally, serine/threonine-protein kinase that acts as a regulator of the p38/MAPK14 stress-activated MAPK cascade and of the MAPK8/JNK cascade. In response to DNA damage, involved in the G2/M transition DNA damage checkpoint by activating the p38/MAPK14 stress-activated MAPK cascade, probably by mediating phosphorylation of upstream MAP2K3 and MAP2K6 kinases. Inhibits basal activity of the MAPK8/JNK cascade and diminishes its activation in response to epidermal growth factor (EGF). Positively regulates canonical T cell receptor (TCR) signaling by preventing early PTPN6/SHP1-mediated inactivation of LCK, ensuring sustained TCR signaling that is required for optimal activation and differentiation of T cells. Phosphorylates PTPN6/SHP1 on 'Thr-394', leading to its polyubiquitination and subsequent proteasomal degradation. Required for cell surface expression of metalloprotease ADAM10 on type 1 transitional B cells which is necessary for their NOTCH-mediated development into marginal zone B cells. Also required for the NOTCH-mediated terminal differentiation of splenic conventional type 2 dendritic cells. Positively regulates osteoblast differentiation by acting as an upstream activator of the JNK pathway. Promotes JNK signaling in hepatocytes and positively regulates hepatocyte lipid storage by inhibiting beta-oxidation and triacylglycerol secretion while enhancing lipid synthesis. Restricts age-associated inflammation by negatively regulating differentiation of macrophages and their production of pro-inflammatory cytokines. Plays a role in negatively regulating the abundance of regulatory T cells in white adipose tissue. In Homo sapiens (Human), this protein is Serine/threonine-protein kinase TAO3 (TAOK3).